The chain runs to 1180 residues: Pyruvate carboxylase 2 (1180 aa).

At Ser2 the chain carries N-acetylserine. Positions 19–471 (EKNKILVANR…WTTFIDDTPQ (453 aa)) constitute a Biotin carboxylation domain. 3 residues coordinate ATP: Lys137, Glu221, and His256. The region spanning 141-338 (RHLAARANVP…IVSAQIQIAA (198 aa)) is the ATP-grasp domain. Arg313 is a catalytic residue. The region spanning 558 to 825 (TLLMDTTWRD…DTGINVEHVR (268 aa)) is the Pyruvate carboxyltransferase domain. Residues 566-570 (RDAHQ) and Arg639 contribute to the substrate site. An a divalent metal cation-binding site is contributed by Asp567. Positions 735, 765, and 767 each coordinate a divalent metal cation. Lys735 carries the N6-carboxylysine modification. Residue Thr899 participates in substrate binding. The Biotinyl-binding domain occupies 1095 to 1170 (KADVHDTHQI…DASDLLVVLE (76 aa)). Lys1136 bears the N6-biotinyllysine mark.

As to quaternary structure, homotetramer. Requires biotin as cofactor. The cofactor is Zn(2+).

The protein localises to the cytoplasm. The enzyme catalyses hydrogencarbonate + pyruvate + ATP = oxaloacetate + ADP + phosphate + H(+). It participates in carbohydrate biosynthesis; gluconeogenesis. Its function is as follows. Pyruvate carboxylase catalyzes a 2-step reaction, involving the ATP-dependent carboxylation of the covalently attached biotin in the first step and the transfer of the carboxyl group to pyruvate in the second. This Saccharomyces cerevisiae (strain ATCC 204508 / S288c) (Baker's yeast) protein is Pyruvate carboxylase 2 (PYC2).